Consider the following 850-residue polypeptide: Pierisin (850 aa).

3 consecutive Ricin B-type lectin domains span residues glycine 267–isoleucine 409, phenylalanine 413–lysine 560, and tyrosine 564–lysine 707.

It belongs to the pierisin ADP-ribosyltransferase family.

It catalyses the reaction a 2'-deoxyguanosine in DNA + NAD(+) = an N(2)-(ADP-L-ribosyl)-2'-deoxyguanosine in DNA + nicotinamide + H(+). Functionally, ADP-ribosylates double-stranded DNA by targeting the N2 amino group of dG residues. Induces apoptosis in a range of human cell lines. May play a role in destroying cells during pupation and/or defense against parasites. The chain is Pierisin from Pieris brassicae (White butterfly).